Consider the following 294-residue polypeptide: 4-hydroxy-tetrahydrodipicolinate synthase (294 aa).

Thr44 is a pyruvate binding site. The Proton donor/acceptor role is filled by Tyr132. Catalysis depends on Lys161, which acts as the Schiff-base intermediate with substrate. Ile206 is a binding site for pyruvate.

It belongs to the DapA family. As to quaternary structure, homotetramer; dimer of dimers.

Its subcellular location is the cytoplasm. It carries out the reaction L-aspartate 4-semialdehyde + pyruvate = (2S,4S)-4-hydroxy-2,3,4,5-tetrahydrodipicolinate + H2O + H(+). It participates in amino-acid biosynthesis; L-lysine biosynthesis via DAP pathway; (S)-tetrahydrodipicolinate from L-aspartate: step 3/4. Catalyzes the condensation of (S)-aspartate-beta-semialdehyde [(S)-ASA] and pyruvate to 4-hydroxy-tetrahydrodipicolinate (HTPA). The chain is 4-hydroxy-tetrahydrodipicolinate synthase from Thermotoga petrophila (strain ATCC BAA-488 / DSM 13995 / JCM 10881 / RKU-1).